The following is a 510-amino-acid chain: Kynurenine 3-monooxygenase (510 aa).

This sequence belongs to the aromatic-ring hydroxylase family. KMO subfamily. FAD serves as cofactor.

The protein localises to the mitochondrion outer membrane. It carries out the reaction L-kynurenine + NADPH + O2 + H(+) = 3-hydroxy-L-kynurenine + NADP(+) + H2O. The protein operates within cofactor biosynthesis; NAD(+) biosynthesis; quinolinate from L-kynurenine: step 1/3. In terms of biological role, catalyzes the hydroxylation of L-kynurenine (L-Kyn) to form 3-hydroxy-L-kynurenine (L-3OHKyn). Required for synthesis of quinolinic acid. In Aspergillus oryzae (strain ATCC 42149 / RIB 40) (Yellow koji mold), this protein is Kynurenine 3-monooxygenase (bna4).